The following is a 243-amino-acid chain: MKVEICVDNLESVITANQFPIDRIELCSALAVGGLTPNLGFIQQAQQISTIPLALMIRPRAGDFLYSEDEIQIMLNDIATAKQLGIQAVVFGALSANGEIDLATTELLVKASQGMEITFHRAFDLCKDPITALEQLIDLGCHRILTSGQAATAFDGIPVIQQLVKQANGRIQVMAGCGVNADNVKQIIEQTKVPEIHFSAKGQRQSLMDSISSARMGTSSQDNVLDIADSQKIKGILKYISLL.

The protein belongs to the CutC family.

It is found in the cytoplasm. This is PF03932 family protein CutC from Glaesserella parasuis serovar 5 (strain SH0165) (Haemophilus parasuis).